The chain runs to 312 residues: Very-long-chain 3-oxoacyl-CoA reductase (312 aa).

A helical transmembrane segment spans residues 4 to 24; it reads APPAAGFLYWVGASTIAYLAL. 50–79 is an NADP(+) binding site; that stretch reads GEWAVVTGGTDGIGKAYAEELAKRGMKIVL. Helical transmembrane passes span 182-202 and 269-285; these read GVILNISSASGMLPVPLLTIY and TTGYVIHSLMGSINSIM. Serine 189 is a substrate binding site. The active-site Proton acceptor is the tyrosine 202. Residues 308 to 312 carry the Di-lysine motif motif; that stretch reads KRKKN.

It belongs to the short-chain dehydrogenases/reductases (SDR) family. 17-beta-HSD 3 subfamily. Expressed in most tissues tested.

The protein localises to the endoplasmic reticulum membrane. It catalyses the reaction a very-long-chain (3R)-3-hydroxyacyl-CoA + NADP(+) = a very-long-chain 3-oxoacyl-CoA + NADPH + H(+). The catalysed reaction is 17beta-estradiol + NAD(+) = estrone + NADH + H(+). The enzyme catalyses 17beta-estradiol + NADP(+) = estrone + NADPH + H(+). It carries out the reaction 3-oxooctadecanoyl-CoA + NADPH + H(+) = (3R)-hydroxyoctadecanoyl-CoA + NADP(+). It catalyses the reaction (7Z,10Z,13Z,16Z)-3-oxodocosatetraenoyl-CoA + NADPH + H(+) = (3R)-hydroxy-(7Z,10Z,13Z,16Z)-docosatetraenoyl-CoA + NADP(+). The catalysed reaction is 3-oxo-(7Z,10Z,13Z,16Z,19Z)-docosapentaenoyl-CoA + NADPH + H(+) = (3R)-hydroxy-(7Z,10Z,13Z,16Z,19Z)-docosapentaenoyl-CoA + NADP(+). The enzyme catalyses (8Z,11Z,14Z)-3-oxoeicosatrienoyl-CoA + NADPH + H(+) = (3R)-hydroxy-(8Z,11Z,14Z)-eicosatrienoyl-CoA + NADP(+). It functions in the pathway lipid metabolism; fatty acid biosynthesis. The protein operates within steroid biosynthesis; estrogen biosynthesis. Functionally, catalyzes the second of the four reactions of the long-chain fatty acids elongation cycle. This endoplasmic reticulum-bound enzymatic process, allows the addition of two carbons to the chain of long- and very long-chain fatty acids/VLCFAs per cycle. This enzyme has a 3-ketoacyl-CoA reductase activity, reducing 3-ketoacyl-CoA to 3-hydroxyacyl-CoA, within each cycle of fatty acid elongation. Thereby, it may participate in the production of VLCFAs of different chain lengths that are involved in multiple biological processes as precursors of membrane lipids and lipid mediators. May also catalyze the transformation of estrone (E1) into estradiol (E2) and play a role in estrogen formation. This chain is Very-long-chain 3-oxoacyl-CoA reductase, found in Mus musculus (Mouse).